Reading from the N-terminus, the 106-residue chain is UPF0145 protein SCO3412 (106 aa).

This sequence belongs to the UPF0145 family.

The polypeptide is UPF0145 protein SCO3412 (Streptomyces coelicolor (strain ATCC BAA-471 / A3(2) / M145)).